A 522-amino-acid chain; its full sequence is E3 ubiquitin-protein ligase TRIM65 (522 aa).

The residue at position 2 (alanine 2) is an N-acetylalanine. Residues 13 to 52 (CSICLGRYRDPVTLPCGHSFCGNCIQDSWRSCEKSCPECR) form an RING-type zinc finger. The segment at 92–134 (SHSARCLRHGRPLEFFCRTEGLCVCSACTVHDCSHHERALLDV) adopts a B box-type zinc-finger fold. The stretch at 141–229 (DQLRARVLVT…QRLTDHLRAL (89 aa)) forms a coiled coil. Serine 187 is modified (phosphoserine). Positions 316 to 509 (APVPSAVCPL…LTLCHQPEAT (194 aa)) constitute a B30.2/SPRY domain.

The protein belongs to the TRIM/RBCC family. Homo-multimerizes. Interacts with ARRDC4.

It localises to the cytoplasm. It carries out the reaction S-ubiquitinyl-[E2 ubiquitin-conjugating enzyme]-L-cysteine + [acceptor protein]-L-lysine = [E2 ubiquitin-conjugating enzyme]-L-cysteine + N(6)-ubiquitinyl-[acceptor protein]-L-lysine.. The protein operates within protein modification; protein ubiquitination. Its function is as follows. E3 ubiquitin ligase that plays a role in several processes including innate immnity, autophagy or inflammation. Negatively regulates miRNAs by modulating the ubiquitination and stability of TNRC6A, a protein involved in RNA-mediated gene silencing by both micro-RNAs (miRNAs) and short interfering RNAs. This ubiquitination results in the suppressed expression of miR-138-5p leading to increased autophagy. Upon enteroviral infection, promotes 'Lys-63'-mediated ubiquitination activation of IFIH1/MDA5 leading to innate signaling cascade. Mechanistically, selectively recognizes MDA5 filaments that occur on dsRNAs. Also plays a role in limitation of inflammation through different mechanisms. First, promotes 'Lys-48'-mediated ubiquitination of VCAM1 leading to its degradation and limitation of LPS-induced lung inflammation. In addition, negatively regulates inflammasome activation by promoting 'lys48'-linked ubiquitination of NLRP3 which is critical for the inhibition of NLRP3 inflammasome activation in resting macrophages. The polypeptide is E3 ubiquitin-protein ligase TRIM65 (Trim65) (Mus musculus (Mouse)).